A 241-amino-acid chain; its full sequence is Phosducin-like protein 2 (241 aa).

In terms of domain architecture, Phosducin spans 34–202 (VLRLQKEAMV…EWKLAEVGAI (169 aa)). The interval 89 to 241 (FGELREISGN…DSSNSDNDTK (153 aa)) is thioredoxin fold.

Belongs to the phosducin family. Interacts with the CCT chaperonin complex and actin. In terms of tissue distribution, testis-specific.

It localises to the endoplasmic reticulum. Functionally, essential for male fertility, spermiogenesis and acrosome formation. In Homo sapiens (Human), this protein is Phosducin-like protein 2 (PDCL2).